We begin with the raw amino-acid sequence, 227 residues long: Pyridoxine/pyridoxamine 5'-phosphate oxidase (227 aa).

Substrate is bound by residues R23–Y26 and K81. FMN is bound by residues R76 to K81, Y91 to T92, R97, K98, and Q120. 3 residues coordinate substrate: Y138, R142, and S146. FMN contacts are provided by residues Q155–S156 and W200. R206–H208 is a substrate binding site. R210 is a binding site for FMN.

Belongs to the pyridoxamine 5'-phosphate oxidase family. Homodimer. It depends on FMN as a cofactor.

It carries out the reaction pyridoxamine 5'-phosphate + O2 + H2O = pyridoxal 5'-phosphate + H2O2 + NH4(+). It catalyses the reaction pyridoxine 5'-phosphate + O2 = pyridoxal 5'-phosphate + H2O2. It participates in cofactor metabolism; pyridoxal 5'-phosphate salvage; pyridoxal 5'-phosphate from pyridoxamine 5'-phosphate: step 1/1. Its pathway is cofactor metabolism; pyridoxal 5'-phosphate salvage; pyridoxal 5'-phosphate from pyridoxine 5'-phosphate: step 1/1. In terms of biological role, catalyzes the oxidation of either pyridoxine 5'-phosphate (PNP) or pyridoxamine 5'-phosphate (PMP) into pyridoxal 5'-phosphate (PLP). In Pectobacterium atrosepticum (strain SCRI 1043 / ATCC BAA-672) (Erwinia carotovora subsp. atroseptica), this protein is Pyridoxine/pyridoxamine 5'-phosphate oxidase.